The chain runs to 99 residues: N(2)-fixation sustaining protein CowN (99 aa).

The protein belongs to the CowN family.

In terms of biological role, is required to sustain N(2)-dependent growth in the presence of low levels of carbon monoxide (CO). Probably acts by protecting the N(2) fixation ability of the nitrogenase complex, which is inactivated in the presence of CO. In Magnetococcus marinus (strain ATCC BAA-1437 / JCM 17883 / MC-1), this protein is N(2)-fixation sustaining protein CowN.